Here is a 166-residue protein sequence, read N- to C-terminus: UPF0178 protein BPUM_2255 (166 aa).

It belongs to the UPF0178 family.

This chain is UPF0178 protein BPUM_2255, found in Bacillus pumilus (strain SAFR-032).